We begin with the raw amino-acid sequence, 158 residues long: 6,7-dimethyl-8-ribityllumazine synthase (158 aa).

Residues Phe22, 57 to 59 (AVE), and 81 to 83 (AVI) each bind 5-amino-6-(D-ribitylamino)uracil. Residue 86–87 (GT) coordinates (2S)-2-hydroxy-3-oxobutyl phosphate. His89 (proton donor) is an active-site residue. Phe114 contacts 5-amino-6-(D-ribitylamino)uracil. Arg128 contributes to the (2S)-2-hydroxy-3-oxobutyl phosphate binding site.

The protein belongs to the DMRL synthase family. In terms of assembly, forms an icosahedral capsid composed of 60 subunits, arranged as a dodecamer of pentamers.

The catalysed reaction is (2S)-2-hydroxy-3-oxobutyl phosphate + 5-amino-6-(D-ribitylamino)uracil = 6,7-dimethyl-8-(1-D-ribityl)lumazine + phosphate + 2 H2O + H(+). The protein operates within cofactor biosynthesis; riboflavin biosynthesis; riboflavin from 2-hydroxy-3-oxobutyl phosphate and 5-amino-6-(D-ribitylamino)uracil: step 1/2. Functionally, catalyzes the formation of 6,7-dimethyl-8-ribityllumazine by condensation of 5-amino-6-(D-ribitylamino)uracil with 3,4-dihydroxy-2-butanone 4-phosphate. This is the penultimate step in the biosynthesis of riboflavin. The chain is 6,7-dimethyl-8-ribityllumazine synthase from Shewanella putrefaciens (strain CN-32 / ATCC BAA-453).